We begin with the raw amino-acid sequence, 94 residues long: Large ribosomal subunit protein eL43B (94 aa).

The C4-type zinc-finger motif lies at 39 to 62 (CPFCGRLTVKRTAAGIWKCSGKGC).

It belongs to the eukaryotic ribosomal protein eL43 family. Component of the large ribosomal subunit (LSU). Mature yeast ribosomes consist of a small (40S) and a large (60S) subunit. The 40S small subunit contains 1 molecule of ribosomal RNA (18S rRNA) and at least 33 different proteins. The large 60S subunit contains 3 rRNA molecules (25S, 5.8S and 5S rRNA) and at least 46 different proteins.

The protein resides in the cytoplasm. Functionally, component of the ribosome, a large ribonucleoprotein complex responsible for the synthesis of proteins in the cell. The small ribosomal subunit (SSU) binds messenger RNAs (mRNAs) and translates the encoded message by selecting cognate aminoacyl-transfer RNA (tRNA) molecules. The large subunit (LSU) contains the ribosomal catalytic site termed the peptidyl transferase center (PTC), which catalyzes the formation of peptide bonds, thereby polymerizing the amino acids delivered by tRNAs into a polypeptide chain. The nascent polypeptides leave the ribosome through a tunnel in the LSU and interact with protein factors that function in enzymatic processing, targeting, and the membrane insertion of nascent chains at the exit of the ribosomal tunnel. This is Large ribosomal subunit protein eL43B (rpl4302) from Schizosaccharomyces pombe (strain 972 / ATCC 24843) (Fission yeast).